Here is a 222-residue protein sequence, read N- to C-terminus: Urease accessory protein UreF (222 aa).

Belongs to the UreF family. In terms of assembly, ureD, UreF and UreG form a complex that acts as a GTP-hydrolysis-dependent molecular chaperone, activating the urease apoprotein by helping to assemble the nickel containing metallocenter of UreC. The UreE protein probably delivers the nickel.

Its subcellular location is the cytoplasm. Its function is as follows. Required for maturation of urease via the functional incorporation of the urease nickel metallocenter. The protein is Urease accessory protein UreF of Roseobacter denitrificans (strain ATCC 33942 / OCh 114) (Erythrobacter sp. (strain OCh 114)).